The primary structure comprises 776 residues: DNA ligase (776 aa).

NAD(+) is bound by residues 31–35 and 80–81; these read DAEYD and SL. Catalysis depends on Lys114, which acts as the N6-AMP-lysine intermediate. 4 residues coordinate NAD(+): Arg135, Glu172, Lys288, and Lys312. Zn(2+) contacts are provided by Cys406, Cys409, Cys436, and Cys442. Residues 693–776 form the BRCT domain; sequence AEGLPLAGQT…TFLAEQGIVV (84 aa).

The protein belongs to the NAD-dependent DNA ligase family. LigA subfamily. Mg(2+) serves as cofactor. Requires Mn(2+) as cofactor.

The enzyme catalyses NAD(+) + (deoxyribonucleotide)n-3'-hydroxyl + 5'-phospho-(deoxyribonucleotide)m = (deoxyribonucleotide)n+m + AMP + beta-nicotinamide D-nucleotide.. In terms of biological role, DNA ligase that catalyzes the formation of phosphodiester linkages between 5'-phosphoryl and 3'-hydroxyl groups in double-stranded DNA using NAD as a coenzyme and as the energy source for the reaction. It is essential for DNA replication and repair of damaged DNA. This is DNA ligase from Pseudomonas putida (strain GB-1).